Consider the following 427-residue polypeptide: Glutamate-1-semialdehyde 2,1-aminomutase (427 aa).

Lys-265 carries the N6-(pyridoxal phosphate)lysine modification.

It belongs to the class-III pyridoxal-phosphate-dependent aminotransferase family. HemL subfamily. As to quaternary structure, homodimer. It depends on pyridoxal 5'-phosphate as a cofactor.

It localises to the cytoplasm. The catalysed reaction is (S)-4-amino-5-oxopentanoate = 5-aminolevulinate. It participates in porphyrin-containing compound metabolism; protoporphyrin-IX biosynthesis; 5-aminolevulinate from L-glutamyl-tRNA(Glu): step 2/2. This Pseudomonas aeruginosa (strain LESB58) protein is Glutamate-1-semialdehyde 2,1-aminomutase.